Here is a 241-residue protein sequence, read N- to C-terminus: Chaperone protein HifB (241 aa).

The N-terminal stretch at 1-27 is a signal peptide; it reads MGKTMFKKTLLFFTALFFAALCAFSAN.

This sequence belongs to the periplasmic pilus chaperone family.

The protein localises to the periplasm. In terms of biological role, mediates assembly of pili by forming soluble multimeric complexes with pili subunits as an intermediate step in the assembly process. This protein is involved in type B pili (HifA) assembly. The chain is Chaperone protein HifB (hifB) from Haemophilus influenzae.